A 65-amino-acid chain; its full sequence is Large ribosomal subunit protein bL35 (65 aa).

It belongs to the bacterial ribosomal protein bL35 family.

This chain is Large ribosomal subunit protein bL35, found in Stenotrophomonas maltophilia (strain R551-3).